A 352-amino-acid polypeptide reads, in one-letter code: UDP-3-O-acylglucosamine N-acyltransferase (352 aa).

Residue His257 is the Proton acceptor of the active site.

Belongs to the transferase hexapeptide repeat family. LpxD subfamily. In terms of assembly, homotrimer.

It carries out the reaction a UDP-3-O-[(3R)-3-hydroxyacyl]-alpha-D-glucosamine + a (3R)-hydroxyacyl-[ACP] = a UDP-2-N,3-O-bis[(3R)-3-hydroxyacyl]-alpha-D-glucosamine + holo-[ACP] + H(+). The protein operates within bacterial outer membrane biogenesis; LPS lipid A biosynthesis. Catalyzes the N-acylation of UDP-3-O-acylglucosamine using 3-hydroxyacyl-ACP as the acyl donor. Is involved in the biosynthesis of lipid A, a phosphorylated glycolipid that anchors the lipopolysaccharide to the outer membrane of the cell. In Methylobacterium nodulans (strain LMG 21967 / CNCM I-2342 / ORS 2060), this protein is UDP-3-O-acylglucosamine N-acyltransferase.